The primary structure comprises 465 residues: Glutamate--tRNA ligase (465 aa).

The 'HIGH' region signature appears at 8–18 (PSPTGYLHIGG). The 'KMSKS' region motif lies at 236-240 (RLSKR). Lys-239 serves as a coordination point for ATP.

Belongs to the class-I aminoacyl-tRNA synthetase family. Glutamate--tRNA ligase type 1 subfamily. In terms of assembly, monomer.

It is found in the cytoplasm. The catalysed reaction is tRNA(Glu) + L-glutamate + ATP = L-glutamyl-tRNA(Glu) + AMP + diphosphate. Its function is as follows. Catalyzes the attachment of glutamate to tRNA(Glu) in a two-step reaction: glutamate is first activated by ATP to form Glu-AMP and then transferred to the acceptor end of tRNA(Glu). The protein is Glutamate--tRNA ligase of Nitrosospira multiformis (strain ATCC 25196 / NCIMB 11849 / C 71).